Consider the following 220-residue polypeptide: ATP-dependent dethiobiotin synthetase BioD (220 aa).

ATP is bound at residue 12-17 (DVGKTI). Residue Thr16 participates in Mg(2+) binding. The active site involves Lys37. A substrate-binding site is contributed by Thr41. Residues Asp49, 107-110 (EGAG), 167-168 (GS), and 197-199 (PAG) contribute to the ATP site. Positions 49 and 107 each coordinate Mg(2+).

This sequence belongs to the dethiobiotin synthetase family. Homodimer. Mg(2+) serves as cofactor.

Its subcellular location is the cytoplasm. The enzyme catalyses (7R,8S)-7,8-diammoniononanoate + CO2 + ATP = (4R,5S)-dethiobiotin + ADP + phosphate + 3 H(+). It participates in cofactor biosynthesis; biotin biosynthesis; biotin from 7,8-diaminononanoate: step 1/2. Catalyzes a mechanistically unusual reaction, the ATP-dependent insertion of CO2 between the N7 and N8 nitrogen atoms of 7,8-diaminopelargonic acid (DAPA, also called 7,8-diammoniononanoate) to form a ureido ring. The chain is ATP-dependent dethiobiotin synthetase BioD from Corynebacterium efficiens (strain DSM 44549 / YS-314 / AJ 12310 / JCM 11189 / NBRC 100395).